We begin with the raw amino-acid sequence, 410 residues long: BTB/POZ and MATH domain-containing protein 5 (410 aa).

The segment at 1 to 24 (MSESVIQGSNPDRVLSPTSSKSVT) is disordered. The 135-residue stretch at 28-162 (NGSHQFVIQG…DDCLIINCTV (135 aa)) folds into the MATH domain. One can recognise a BTB domain in the interval 198–264 (SDITFNIAGE…MYKDSLPEDV (67 aa)).

This sequence belongs to the Tdpoz family. Heterodimer with BPM1 and BPM3. Interacts with RAP2-4. Binds to MYB56 at the promoter of FLOWERING LOCUS T (FT). In terms of tissue distribution, ubiquitous.

Its subcellular location is the nucleus. It is found in the cytoplasm. The protein operates within protein modification; protein ubiquitination. May act as a substrate-specific adapter of an E3 ubiquitin-protein ligase complex (CUL3-RBX1-BTB) which mediates the ubiquitination and subsequent proteasomal degradation of target proteins. In Arabidopsis thaliana (Mouse-ear cress), this protein is BTB/POZ and MATH domain-containing protein 5 (BPM5).